Here is a 409-residue protein sequence, read N- to C-terminus: Broad specificity amino-acid racemase (409 aa).

A signal peptide spans 1-24 (MPFRRTLLAASLVLLITGQAPLYA). Cys71 and Cys97 are joined by a disulfide. The Proton acceptor role is filled by Lys75. Lys75 carries the N6-(pyridoxal phosphate)lysine modification. Residue Arg174 participates in substrate binding. Tyr301 serves as the catalytic Proton acceptor. Met349 serves as a coordination point for substrate.

It belongs to the alanine racemase family. Bsr subfamily. As to quaternary structure, monomer. Forms a head-to-tail homodimer in the structure. The cofactor is pyridoxal 5'-phosphate.

It localises to the periplasm. The catalysed reaction is an L-alpha-amino acid = a D-alpha-amino acid. The enzyme catalyses L-lysine = D-lysine. It carries out the reaction L-arginine = D-arginine. It catalyses the reaction L-alanine = D-alanine. Activity is enhanced by Co(2+), Mn(2+) and Sr(2+), and decreased by Cu(2+). In terms of biological role, amino-acid racemase that catalyzes the interconversion of L-lysine and D-lysine, and L-arginine and D-arginine. To a lesser extent, is also able to interconvert alanine and isoleucine enantiomers. The polypeptide is Broad specificity amino-acid racemase (Pseudomonas putida (Arthrobacter siderocapsulatus)).